The sequence spans 278 residues: HTH-type transcriptional activator RhaS (278 aa).

Residues 174-272 form the HTH araC/xylS-type domain; that stretch reads NHLIAWLEDH…GWSPREIRQG (99 aa). 2 consecutive DNA-binding regions (H-T-H motif) follow at residues 191–212 and 239–262; these read EAIA…KQHT and VTHI…RREF.

In terms of assembly, binds DNA as a dimer.

The protein localises to the cytoplasm. Activates expression of the rhaBAD and rhaT operons. The protein is HTH-type transcriptional activator RhaS of Escherichia fergusonii (strain ATCC 35469 / DSM 13698 / CCUG 18766 / IAM 14443 / JCM 21226 / LMG 7866 / NBRC 102419 / NCTC 12128 / CDC 0568-73).